Consider the following 94-residue polypeptide: Co-chaperonin GroES (94 aa).

This sequence belongs to the GroES chaperonin family. As to quaternary structure, heptamer of 7 subunits arranged in a ring. Interacts with the chaperonin GroEL.

It localises to the cytoplasm. In terms of biological role, together with the chaperonin GroEL, plays an essential role in assisting protein folding. The GroEL-GroES system forms a nano-cage that allows encapsulation of the non-native substrate proteins and provides a physical environment optimized to promote and accelerate protein folding. GroES binds to the apical surface of the GroEL ring, thereby capping the opening of the GroEL channel. The protein is Co-chaperonin GroES of Acetivibrio thermocellus (strain ATCC 27405 / DSM 1237 / JCM 9322 / NBRC 103400 / NCIMB 10682 / NRRL B-4536 / VPI 7372) (Clostridium thermocellum).